The following is a 381-amino-acid chain: MSASSSSFEQPQVITCNAAVAWRAGEPLVMEEVEVSPPQPLEIRIKVVCTSLCRSDLSAWESQSLLPRIFGHEAAGIVESIGEGVTEFEKGDHVLAVFTGECGSCRHCISGKSNMCQVLGMERKGLMHSDQKTRFSIKGKPVYHYCAVSSFSEYTVVHSGCAVKVDPLAPLHKICLLSCGVAAGLGAAWNVADVQKGSSVVIFGLGTVGLSVAQGAKLRGAAQILGVDINPAKAEQAKTFGVTDFINSNDLSEPIPQVIKRMTGGGADFSFECVGDTGIATTALQSCSDGWGMTVTLGVPKAKPEVSAHYGLFLSGKSLKGTLFGGWKPKSDLPSLIDKYMNKEIMIDEFITHNLSFDEINKAFVLMREGKCLRCVLHMPK.

Positions 53, 55, 72, 102, 105, 108, 116, and 179 each coordinate Zn(2+). Residues S55 and H72 each contribute to the an alcohol site. S55 is an NAD(+) binding site. Residues 204–209 (GLGTVG), D228, K233, 297–299 (LGV), F324, and R374 contribute to the NAD(+) site.

Belongs to the zinc-containing alcohol dehydrogenase family. Class-III subfamily. As to quaternary structure, homodimer. It depends on Zn(2+) as a cofactor.

It is found in the cytoplasm. The enzyme catalyses a primary alcohol + NAD(+) = an aldehyde + NADH + H(+). The catalysed reaction is a secondary alcohol + NAD(+) = a ketone + NADH + H(+). The chain is Alcohol dehydrogenase-like 6 from Arabidopsis thaliana (Mouse-ear cress).